A 280-amino-acid chain; its full sequence is Fasciclin-like arabinogalactan protein 3 (280 aa).

A signal peptide spans 1-24 (MGLKVSSSLLCLTILLAVSSIVSA). An FAS1 domain is found at 25 to 169 (VNITRVLEKY…LSVVQISMPI (145 aa)). N-linked (GlcNAc...) asparagine glycans are attached at residues asparagine 26, asparagine 126, and asparagine 159. Residues 180–193 (VPPPPPMSSPPAPS) show a composition bias toward pro residues. Residues 180 to 262 (VPPPPPMSSP…EPPSSASNTG (83 aa)) form a disordered region. A compositionally biased stretch (low complexity) spans 219–234 (APETAPASAPSESDSP). The GPI-anchor amidated serine moiety is linked to residue serine 256. Positions 257–280 (SASNTGLSFGAVLVLGFVASFVGF) are cleaved as a propeptide — removed in mature form.

It belongs to the fasciclin-like AGP family.

The protein localises to the cell membrane. Functionally, may be a cell surface adhesion protein. The polypeptide is Fasciclin-like arabinogalactan protein 3 (FLA3) (Arabidopsis thaliana (Mouse-ear cress)).